The primary structure comprises 1399 residues: DNA-directed RNA polymerase subunit beta' (1399 aa).

Zn(2+) contacts are provided by Cys70, Cys72, Cys85, and Cys88. Mg(2+) is bound by residues Asp460, Asp462, and Asp464. Zn(2+)-binding residues include Cys814, Cys888, Cys895, and Cys898.

This sequence belongs to the RNA polymerase beta' chain family. The RNAP catalytic core consists of 2 alpha, 1 beta, 1 beta' and 1 omega subunit. When a sigma factor is associated with the core the holoenzyme is formed, which can initiate transcription. The cofactor is Mg(2+). Requires Zn(2+) as cofactor.

The enzyme catalyses RNA(n) + a ribonucleoside 5'-triphosphate = RNA(n+1) + diphosphate. Its function is as follows. DNA-dependent RNA polymerase catalyzes the transcription of DNA into RNA using the four ribonucleoside triphosphates as substrates. The protein is DNA-directed RNA polymerase subunit beta' of Stutzerimonas stutzeri (strain A1501) (Pseudomonas stutzeri).